Here is a 285-residue protein sequence, read N- to C-terminus: CCR4-NOT transcription complex subunit 7 (285 aa).

Asp-40, Glu-42, Asp-161, Asp-230, and Glu-278 together coordinate a divalent metal cation.

Belongs to the CAF1 family. In terms of assembly, component of the CCR4-NOT complex. Mn(2+) is required as a cofactor. The cofactor is Mg(2+). Co(2+) serves as cofactor.

Its subcellular location is the nucleus. The protein localises to the cytoplasm. The enzyme catalyses Exonucleolytic cleavage of poly(A) to 5'-AMP.. Its function is as follows. Has 3'-5' poly(A) exoribonuclease activity for synthetic poly(A) RNA substrate. Catalytic component of the CCR4-NOT complex which is one of the major cellular mRNA deadenylases and is linked to various cellular processes including bulk mRNA degradation, miRNA-mediated repression, translational repression during translational initiation and general transcription regulation. During miRNA-mediated repression the complex also seems to act as translational repressor during translational initiation. Additional complex functions may be a consequence of its influence on mRNA expression. The polypeptide is CCR4-NOT transcription complex subunit 7 (cnot7) (Xenopus laevis (African clawed frog)).